The primary structure comprises 65 residues: Prokaryotic ubiquitin-like protein Pup (65 aa).

The span at 1-13 (MAQEQKQPRKSSE) shows a compositional bias: basic and acidic residues. Positions 1 to 34 (MAQEQKQPRKSSEADEAVEAVAETDVSERKEALD) are disordered. The segment at 21-59 (VAETDVSERKEALDSDVDDILDEIDDVLETNAEDFVKSF) is ARC ATPase binding. A coiled-coil region spans residues 25–49 (DVSERKEALDSDVDDILDEIDDVLE). E65 is covalently cross-linked (Isoglutamyl lysine isopeptide (Glu-Lys) (interchain with K-? in acceptor proteins)).

It belongs to the prokaryotic ubiquitin-like protein family. In terms of assembly, strongly interacts with the proteasome-associated ATPase ARC through a hydrophobic interface; the interacting region of Pup lies in its C-terminal half. There is one Pup binding site per ARC hexamer ring.

The protein operates within protein degradation; proteasomal Pup-dependent pathway. In terms of biological role, protein modifier that is covalently attached to lysine residues of substrate proteins, thereby targeting them for proteasomal degradation. The tagging system is termed pupylation. The polypeptide is Prokaryotic ubiquitin-like protein Pup (Nocardioides sp. (strain ATCC BAA-499 / JS614)).